The chain runs to 150 residues: MEVLIVNESKHAAPRKFIQTWMQLVVTELKRKKVLKAEQARRELTLVFLDKKPAQKINMEFRGKNYATDVLSFDSMDPGSLGELVLCPEVLKRQSKEHGLTYQQELGYMLLHGVLHLLGYDHETSEAEALEMFGIQDAAFEVLLKKVSAK.

H112, H116, and H122 together coordinate Zn(2+).

This sequence belongs to the endoribonuclease YbeY family. Requires Zn(2+) as cofactor.

It is found in the cytoplasm. Single strand-specific metallo-endoribonuclease involved in late-stage 70S ribosome quality control and in maturation of the 3' terminus of the 16S rRNA. The sequence is that of Endoribonuclease YbeY from Bdellovibrio bacteriovorus (strain ATCC 15356 / DSM 50701 / NCIMB 9529 / HD100).